The following is a 399-amino-acid chain: Fluconazole resistance protein 3 (399 aa).

2 disordered regions span residues 1–21 (MNFK…SKAF) and 103–197 (HPYI…EKDA). A compositionally biased stretch (polar residues) spans 103–145 (HPYITNTNNHLSYSNSSEEFSPIGNNMSPDSTGGANSNNFTSG). Low complexity predominate over residues 167–184 (SGNNNNNNGTSRSSQSSS). A bZIP domain is found at 210–273 (EELQMKRKAQ…ISIATENEIL (64 aa)). The tract at residues 215–234 (KRKAQNRAAQRAFRERKESK) is basic motif. Residues 235–242 (LKELEAKL) form a leucine-zipper region.

This sequence belongs to the bZIP family.

It localises to the nucleus. Transcription factor that confers fluconazole resistance in S.cerevisiae by activation of the PDR5 gene. Can also activate the transcription of S.cerevisiae genes involved in 4-nitroquinoline-N-oxide resistance. The polypeptide is Fluconazole resistance protein 3 (FCR3) (Candida albicans (Yeast)).